The following is a 249-amino-acid chain: Sulfate transporter CysZ (249 aa).

4 helical membrane passes run 26-46, 71-91, 150-170, and 206-226; these read LFVLLPLAINLVLFVGLIYFA, VIWPLFVVLVAFMVFFSFTML, LFILSLIPVVNLIAAPLWLLF, and LGFGGIVYLALLIPLVNILMM.

It belongs to the CysZ family.

It localises to the cell inner membrane. Functionally, high affinity, high specificity proton-dependent sulfate transporter, which mediates sulfate uptake. Provides the sulfur source for the cysteine synthesis pathway. The polypeptide is Sulfate transporter CysZ (Pseudomonas fluorescens (strain ATCC BAA-477 / NRRL B-23932 / Pf-5)).